Here is a 292-residue protein sequence, read N- to C-terminus: AKT-interacting protein (292 aa).

The span at 1-11 (MNPLWSMSSGS) shows a compositional bias: polar residues. The tract at residues 1 to 64 (MNPLWSMSSG…SPAPAAQSTN (64 aa)) is disordered. Residues 14–23 (KRAEGEEKTL) are compositionally biased toward basic and acidic residues. A Phosphoserine modification is found at S30. The UBC core domain maps to 74-222 (YLEYSLLAEF…VVDSVKVCTA (149 aa)).

The protein belongs to the ubiquitin-conjugating enzyme family. FTS subfamily. Component of the FTS/Hook/FHIP complex (FHF complex), composed of AKTIP/FTS, FHIP1B, and one or more members of the Hook family of proteins HOOK1, HOOK2, and HOOK3. Interacts directly with HOOK1, HOOK2 and HOOK3. The FHF complex associates with the homotypic vesicular sorting complex (the HOPS complex). Also interacts with AKT1. May interact with FHIP1A.

It is found in the cytoplasm. Its subcellular location is the cell membrane. Component of the FTS/Hook/FHIP complex (FHF complex). The FHF complex may function to promote vesicle trafficking and/or fusion via the homotypic vesicular protein sorting complex (the HOPS complex). Regulates apoptosis by enhancing phosphorylation and activation of AKT1. Increases release of TNFSF6 via the AKT1/GSK3B/NFATC1 signaling cascade. FHF complex promotes the distribution of AP-4 complex to the perinuclear area of the cell. The chain is AKT-interacting protein (Aktip) from Rattus norvegicus (Rat).